A 303-amino-acid polypeptide reads, in one-letter code: Shikimate kinase 1, chloroplastic (303 aa).

Residues 1–66 constitute a chloroplast transit peptide; the sequence is MEAAITQRIQ…QRRAVSPAVS (66 aa). 109 to 116 contacts ATP; it reads GMMGSGKT. Threonine 116 provides a ligand contact to Mg(2+). Residues aspartate 134, arginine 159, and glycine 181 each contribute to the substrate site. Arginine 220 contributes to the ATP binding site.

The protein belongs to the shikimate kinase family. Homodimer. It depends on Mg(2+) as a cofactor.

The protein resides in the plastid. The protein localises to the chloroplast. It carries out the reaction shikimate + ATP = 3-phosphoshikimate + ADP + H(+). It participates in metabolic intermediate biosynthesis; chorismate biosynthesis; chorismate from D-erythrose 4-phosphate and phosphoenolpyruvate: step 5/7. In terms of biological role, catalyzes the specific phosphorylation of the 3-hydroxyl group of shikimic acid using ATP as a cosubstrate. This is Shikimate kinase 1, chloroplastic (SK1) from Arabidopsis thaliana (Mouse-ear cress).